An 852-amino-acid chain; its full sequence is Mannosyl-oligosaccharide glucosidase GCS1 (852 aa).

Residues 1–31 (MTGASRRSARGRIKSSSLSPGSDEGSAYPPS) are disordered. Residues 1–51 (MTGASRRSARGRIKSSSLSPGSDEGSAYPPSIRRGKGKELVSIGAFKTNLK) are Cytoplasmic-facing. The Endoplasmic reticulum targeting signature appears at 6–12 (RRSARGR). Low complexity predominate over residues 15-26 (SSSLSPGSDEGS). Residues 52-72 (ILVGLIILGIIVIYFVINRLV) form a helical; Signal-anchor for type II membrane protein membrane-spanning segment. The Lumenal segment spans residues 73-852 (RHGLLFDESQ…LIMSEDYPIF (780 aa)). A required for endoplasmic reticulum targeting region spans residues 91 to 150 (PAPKVMDLSMFQGEHKESLYWGTYRPHVYFGVRARTPLSLVAGLMWLGVKDEMYVMRHFC). Residues asparagine 282, asparagine 552, and asparagine 570 are each glycosylated (N-linked (GlcNAc...) asparagine). Over residues 574–583 (QELNPKTLSS) the composition is skewed to polar residues. Positions 574–593 (QELNPKTLSSGLDDYPRASH) are disordered. Aspartate 586 acts as the Proton donor in catalysis. 3 N-linked (GlcNAc...) asparagine glycosylation sites follow: asparagine 633, asparagine 662, and asparagine 730. The Proton acceptor role is filled by glutamate 819.

The protein belongs to the glycosyl hydrolase 63 family. Constitutively expressed in roots, stems, leaves, flowers and siliques.

It is found in the endoplasmic reticulum membrane. The catalysed reaction is N(4)-(alpha-D-Glc-(1-&gt;2)-alpha-D-Glc-(1-&gt;3)-alpha-D-Glc-(1-&gt;3)-alpha-D-Man-(1-&gt;2)-alpha-D-Man-(1-&gt;2)-alpha-D-Man-(1-&gt;3)-[alpha-D-Man-(1-&gt;2)-alpha-D-Man-(1-&gt;3)-[alpha-D-Man-(1-&gt;2)-alpha-D-Man-(1-&gt;6)]-alpha-D-Man-(1-&gt;6)]-beta-D-Man-(1-&gt;4)-beta-D-GlcNAc-(1-&gt;4)-beta-D-GlcNAc)-L-asparaginyl-[protein] + H2O = N(4)-(alpha-D-Glc-(1-&gt;3)-alpha-D-Glc-(1-&gt;3)-alpha-D-Man-(1-&gt;2)-alpha-D-Man-(1-&gt;2)-alpha-D-Man-(1-&gt;3)-[alpha-D-Man-(1-&gt;2)-alpha-D-Man-(1-&gt;3)-[alpha-D-Man-(1-&gt;2)-alpha-D-Man-(1-&gt;6)]-alpha-D-Man-(1-&gt;6)]-beta-D-Man-(1-&gt;4)-beta-D-GlcNAc-(1-&gt;4)-beta-D-GlcNAc)-L-asparaginyl-[protein] + beta-D-glucose. It participates in glycan metabolism; N-glycan degradation. In terms of biological role, cleaves the distal alpha 1,2-linked glucose residue from the Glc(3)Man(9)GlcNAc(2) oligosaccharide precursor. Required for the accumulation of seed storage proteins, the formation of protein bodies, cell differentiation, cellulose biosynthesis and organization (in cell walls), cell shape determination and organization (e.g. epidermal cells), and embryo development. Involved in root development. This is Mannosyl-oligosaccharide glucosidase GCS1 (GCS1) from Arabidopsis thaliana (Mouse-ear cress).